A 159-amino-acid polypeptide reads, in one-letter code: Ribosomal RNA large subunit methyltransferase H (159 aa).

S-adenosyl-L-methionine is bound by residues Leu-76, Gly-108, and 127 to 132; that span reads FGLLTL.

This sequence belongs to the RNA methyltransferase RlmH family. As to quaternary structure, homodimer.

It localises to the cytoplasm. The enzyme catalyses pseudouridine(1915) in 23S rRNA + S-adenosyl-L-methionine = N(3)-methylpseudouridine(1915) in 23S rRNA + S-adenosyl-L-homocysteine + H(+). In terms of biological role, specifically methylates the pseudouridine at position 1915 (m3Psi1915) in 23S rRNA. The sequence is that of Ribosomal RNA large subunit methyltransferase H from Streptococcus equi subsp. zooepidemicus (strain MGCS10565).